Here is a 181-residue protein sequence, read N- to C-terminus: Oligoribonuclease (181 aa).

An Exonuclease domain is found at 8–171 (LIWIDLEMTG…DDIRESVAEL (164 aa)). The active site involves Y129.

Belongs to the oligoribonuclease family.

The protein localises to the cytoplasm. 3'-to-5' exoribonuclease specific for small oligoribonucleotides. In Klebsiella pneumoniae subsp. pneumoniae (strain ATCC 700721 / MGH 78578), this protein is Oligoribonuclease.